Consider the following 91-residue polypeptide: Small ribosomal subunit protein uS19 (91 aa).

Positions 72-91 (GEFSPTRKFGGHGDDKKKKK) are disordered. Positions 82–91 (GHGDDKKKKK) are enriched in basic and acidic residues.

This sequence belongs to the universal ribosomal protein uS19 family.

In terms of biological role, protein S19 forms a complex with S13 that binds strongly to the 16S ribosomal RNA. The polypeptide is Small ribosomal subunit protein uS19 (Spiroplasma kunkelii).